We begin with the raw amino-acid sequence, 135 residues long: ATP synthase epsilon chain (135 aa).

Belongs to the ATPase epsilon chain family. In terms of assembly, F-type ATPases have 2 components, CF(1) - the catalytic core - and CF(0) - the membrane proton channel. CF(1) has five subunits: alpha(3), beta(3), gamma(1), delta(1), epsilon(1). CF(0) has three main subunits: a, b and c.

Its subcellular location is the cell inner membrane. Produces ATP from ADP in the presence of a proton gradient across the membrane. The sequence is that of ATP synthase epsilon chain from Hyphomonas neptunium (strain ATCC 15444).